A 464-amino-acid chain; its full sequence is Argininosuccinate lyase (464 aa).

It belongs to the lyase 1 family. Argininosuccinate lyase subfamily.

It is found in the cytoplasm. It carries out the reaction 2-(N(omega)-L-arginino)succinate = fumarate + L-arginine. Its pathway is amino-acid biosynthesis; L-arginine biosynthesis; L-arginine from L-ornithine and carbamoyl phosphate: step 3/3. In Pseudomonas fluorescens (strain SBW25), this protein is Argininosuccinate lyase.